A 360-amino-acid chain; its full sequence is Heat-inducible transcription repressor HrcA (360 aa).

This sequence belongs to the HrcA family.

Negative regulator of class I heat shock genes (grpE-dnaK-dnaJ and groELS operons). Prevents heat-shock induction of these operons. This chain is Heat-inducible transcription repressor HrcA, found in Mesorhizobium japonicum (strain LMG 29417 / CECT 9101 / MAFF 303099) (Mesorhizobium loti (strain MAFF 303099)).